The primary structure comprises 249 residues: Probable transcriptional regulator ycf27 (249 aa).

The 114-residue stretch at 13 to 126 (HLLIVDDENN…ELEARIQSIL (114 aa)) folds into the Response regulatory domain. Aspartate 62 carries the 4-aspartylphosphate modification. A DNA-binding region (H-T-H motif) is located at residues 82-100 (DIPIIMLTALEDVLDKVTG). A DNA-binding region (ompR/PhoB-type) is located at residues 142-246 (INLFKTGSLN…ARGTGYLCRK (105 aa)).

The protein localises to the plastid. Its subcellular location is the chloroplast. Functionally, probable promoter-specific protein mediating the interaction between DNA and RNA polymerase. This chain is Probable transcriptional regulator ycf27 (ycf27), found in Cyanidium caldarium (Red alga).